The sequence spans 242 residues: Uridylate kinase (242 aa).

Position 12–15 (K12–G15) interacts with ATP. An involved in allosteric activation by GTP region spans residues G20–G25. G54 contacts UMP. ATP-binding residues include G55 and R59. UMP is bound by residues D74 and T135–T142. Residues Q163, Y168, and D171 each coordinate ATP.

This sequence belongs to the UMP kinase family. In terms of assembly, homohexamer.

The protein localises to the cytoplasm. The enzyme catalyses UMP + ATP = UDP + ADP. The protein operates within pyrimidine metabolism; CTP biosynthesis via de novo pathway; UDP from UMP (UMPK route): step 1/1. Allosterically activated by GTP. Inhibited by UTP. Its function is as follows. Catalyzes the reversible phosphorylation of UMP to UDP. The polypeptide is Uridylate kinase (Desulforamulus reducens (strain ATCC BAA-1160 / DSM 100696 / MI-1) (Desulfotomaculum reducens)).